The chain runs to 355 residues: Ataxin-3 (355 aa).

Residue M1 forms a Peptide (Met-Gly) (interchain with G-Cter in ubiquitin) linkage. The region spanning 1–180 (MESIFHEKQE…DCEADQLLQM (180 aa)) is the Josephin domain. The active-site Nucleophile is C14. H119 serves as the catalytic Proton acceptor. Residue N134 is part of the active site. A Glycyl lysine isopeptide (Lys-Gly) (interchain with G-Cter in ubiquitin) cross-link involves residue K200. UIM domains are found at residues 224–243 (DDED…IDME) and 244–263 (DEEA…SSRG). Residues 257-333 (MQGSSRGMCE…AGNAMSEEDV (77 aa)) are disordered. S268, S272, and S273 each carry phosphoserine. The segment covering 279–301 (EELRKRREAYFEKQQHQQQEADR) has biased composition (basic and acidic residues). Residues 312–326 (PTTSSGGLRSNQAGN) are compositionally biased toward polar residues. S321 is subject to Phosphoserine. Positions 329–348 (SEEDVLRATVTVSLETAKDS) constitute a UIM 3 domain.

In terms of assembly, interacts with STUB1/CHIP (when monoubiquitinated). Interacts with DNA repair proteins RAD23A and RAD23B. Interacts with BECN1 (via its poly-Gln domain). Interacts with PRKN, UBR2, VCP and tubulin. In terms of processing, monoubiquitinated by UBE2W, possibly leading to activate the deubiquitinating enzyme activity. Ubiquitously expressed.

Its subcellular location is the nucleus matrix. It localises to the nucleus. The protein resides in the lysosome membrane. It carries out the reaction Thiol-dependent hydrolysis of ester, thioester, amide, peptide and isopeptide bonds formed by the C-terminal Gly of ubiquitin (a 76-residue protein attached to proteins as an intracellular targeting signal).. Deubiquitinating enzyme involved in protein homeostasis maintenance, transcription, cytoskeleton regulation, myogenesis and degradation of misfolded chaperone substrates. Binds long polyubiquitin chains and trims them, while it has weak or no activity against chains of 4 or less ubiquitins. Involved in degradation of misfolded chaperone substrates via its interaction with STUB1/CHIP: recruited to monoubiquitinated STUB1/CHIP, and restricts the length of ubiquitin chain attached to STUB1/CHIP substrates and preventing further chain extension. Interacts with key regulators of transcription and represses transcription: acts as a histone-binding protein that regulates transcription. Acts as a negative regulator of mTORC1 signaling in response to amino acid deprivation by mediating deubiquitination of RHEB, thereby promoting RHEB inactivation by the TSC-TBC complex. Regulates autophagy via the deubiquitination of 'Lys-402' of BECN1 leading to the stabilization of BECN1. The polypeptide is Ataxin-3 (Atxn3) (Rattus norvegicus (Rat)).